The following is a 200-amino-acid chain: Coiled-coil domain-containing protein 85B (200 aa).

Positions 57–84 form a coiled coil; it reads LQGHLLEIRELKVINQRLQEENQELRDL. Residues 178–188 are compositionally biased toward low complexity; that stretch reads DGSSSTGSVGS. The disordered stretch occupies residues 178-200; that stretch reads DGSSSTGSVGSPDQLHLVCSPDD.

It belongs to the CCDC85 family.

The protein localises to the nucleus. It is found in the cytoplasm. The protein resides in the cytoskeleton. It localises to the microtubule organizing center. Its subcellular location is the centrosome. The protein localises to the cell junction. It is found in the adherens junction. Its function is as follows. Functions as a transcriptional repressor. May inhibit the activity of CTNNB1 in a TP53-dependent manner and thus regulate cell growth. May function in adipocyte differentiation, negatively regulating mitotic clonal expansion. Plays a role in cell-cell adhesion and epithelium development through its interaction with proteins of the beta-catenin family. The protein is Coiled-coil domain-containing protein 85B (ccdc85b) of Danio rerio (Zebrafish).